The chain runs to 78 residues: FXYD domain-containing ion transport regulator 7 (78 aa).

Over 1-22 (MATQVPTKVPQDPDPFYYDYDT) the chain is Extracellular. Residues Thr3 and Thr7 are each glycosylated (O-linked (GlcNAc) threonine). A helical membrane pass occupies residues 23 to 43 (VQTVGMTLATILFLLGILIIL). At 44–78 (SKKVKCRKADSRSESPTCKSCKSELPSSAPGGGGV) the chain is on the cytoplasmic side. Residues 52–78 (ADSRSESPTCKSCKSELPSSAPGGGGV) form a disordered region. Ser71 is modified (phosphoserine).

This sequence belongs to the FXYD family. Regulatory subunit of the sodium/potassium-transporting ATPase which is composed of a catalytic alpha subunit, a non-catalytic beta subunit and an additional regulatory subunit. The regulatory subunit, a member of the FXYD protein family, modulates the enzymatic activity in a tissue- and isoform-specific way by changing affinities of the Na+/K+-ATPase toward Na(+), K(+) or ATP. O-glycosylated; required for stabilization and translocation to the plasma membrane.

The protein localises to the cell membrane. In terms of biological role, associates with and regulates the activity of the sodium/potassium-transporting ATPase (NKA) which catalyzes the hydrolysis of ATP coupled with the exchange of Na(+) and K(+) ions across the plasma membrane. Reduces the apparent affinity for external K(+), an effect that depends on the presence of external Na(+) and voltage. Increases the apparent affinity for intracellular Na(+). The polypeptide is FXYD domain-containing ion transport regulator 7 (FXYD7) (Bos taurus (Bovine)).